The primary structure comprises 118 residues: Small ribosomal subunit protein uS17 (118 aa).

This sequence belongs to the universal ribosomal protein uS17 family. In terms of assembly, part of the 30S ribosomal subunit.

Its function is as follows. One of the primary rRNA binding proteins, it binds specifically to the 5'-end of 16S ribosomal RNA. In Methanopyrus kandleri (strain AV19 / DSM 6324 / JCM 9639 / NBRC 100938), this protein is Small ribosomal subunit protein uS17.